Reading from the N-terminus, the 296-residue chain is Origin of replication complex subunit 6 (296 aa).

Residues 212–296 (PSKRKHDDDS…MALEVSSAAN (85 aa)) form a disordered region. A compositionally biased stretch (acidic residues) spans 220-236 (DSDSSGESSGDDQDELD). Over residues 254–264 (WKSSVLSSNKQ) the composition is skewed to polar residues.

The protein belongs to the ORC6 family. As to quaternary structure, component of the origin recognition complex (ORC) composed of at least ORC1, ORC2, ORC3, ORC4, ORC5 and ORC6. ORC is regulated in a cell-cycle and development dependent manner. It is sequentially assembled at the exit from anaphase of mitosis and disassembled as cells enter S phase.

It is found in the nucleus. Functionally, component of the origin recognition complex (ORC) that binds origins of replication. DNA-binding is ATP-dependent. The specific DNA sequences that define origins of replication have not been identified yet. ORC is required to assemble the pre-replication complex necessary to initiate DNA replication. The protein is Origin of replication complex subunit 6 of Oryza sativa subsp. indica (Rice).